A 335-amino-acid polypeptide reads, in one-letter code: Nucleoid-associated protein Pput_1012 (335 aa).

Belongs to the YejK family.

Its subcellular location is the cytoplasm. The protein localises to the nucleoid. The polypeptide is Nucleoid-associated protein Pput_1012 (Pseudomonas putida (strain ATCC 700007 / DSM 6899 / JCM 31910 / BCRC 17059 / LMG 24140 / F1)).